Here is a 385-residue protein sequence, read N- to C-terminus: Probable splicing factor YJU2B (385 aa).

Residues 1-26 (MGERKGQNKYYPPDFNPEKHGSLNRY) are disordered. S40 is modified (phosphoserine). The stretch at 182–215 (LNSMLRRHFREKKKAMQEEEEKDQALQAKANLAI) forms a coiled coil. The tract at residues 256–385 (FPSAQGPSTS…VADYSDSESE (130 aa)) is disordered. Residues 260–270 (QGPSTSSSKAS) show a composition bias toward polar residues. Position 306 is a phosphoserine (S306). 2 stretches are compositionally biased toward polar residues: residues 307-316 (PQCTADNSLS) and 359-373 (GSSQ…TPNA).

This sequence belongs to the CWC16 family.

Its subcellular location is the nucleus. May be involved in mRNA splicing. The protein is Probable splicing factor YJU2B of Rattus norvegicus (Rat).